A 228-amino-acid polypeptide reads, in one-letter code: Cytochrome c oxidase subunit 2 (228 aa).

At 1–14 the chain is on the mitochondrial intermembrane side; the sequence is MPHASQLSLQEAMG. Residues 15-45 form a helical membrane-spanning segment; sequence PTMEEVIFLHDHVLLLTCLMTMVITMFTLTA. At 46-59 the chain is on the mitochondrial matrix side; sequence TTTALTHNDPTEEV. Residues 60–87 traverse the membrane as a helical segment; the sequence is EQLEAAWTVAPIMILILTALPSVRSLYL. Topologically, residues 88–228 are mitochondrial intermembrane; it reads MEEVFNPYLT…HFEQWLISEQ (141 aa). Cu cation-binding residues include H162, C197, E199, C201, H205, and M208. A Mg(2+)-binding site is contributed by E199.

This sequence belongs to the cytochrome c oxidase subunit 2 family. As to quaternary structure, component of the cytochrome c oxidase (complex IV, CIV), a multisubunit enzyme composed of 14 subunits. The complex is composed of a catalytic core of 3 subunits MT-CO1, MT-CO2 and MT-CO3, encoded in the mitochondrial DNA, and 11 supernumerary subunits COX4I, COX5A, COX5B, COX6A, COX6B, COX6C, COX7A, COX7B, COX7C, COX8 and NDUFA4, which are encoded in the nuclear genome. The complex exists as a monomer or a dimer and forms supercomplexes (SCs) in the inner mitochondrial membrane with NADH-ubiquinone oxidoreductase (complex I, CI) and ubiquinol-cytochrome c oxidoreductase (cytochrome b-c1 complex, complex III, CIII), resulting in different assemblies (supercomplex SCI(1)III(2)IV(1) and megacomplex MCI(2)III(2)IV(2)). Found in a complex with TMEM177, COA6, COX18, COX20, SCO1 and SCO2. Interacts with TMEM177 in a COX20-dependent manner. Interacts with COX20. Interacts with COX16. It depends on Cu cation as a cofactor.

It localises to the mitochondrion inner membrane. The enzyme catalyses 4 Fe(II)-[cytochrome c] + O2 + 8 H(+)(in) = 4 Fe(III)-[cytochrome c] + 2 H2O + 4 H(+)(out). Functionally, component of the cytochrome c oxidase, the last enzyme in the mitochondrial electron transport chain which drives oxidative phosphorylation. The respiratory chain contains 3 multisubunit complexes succinate dehydrogenase (complex II, CII), ubiquinol-cytochrome c oxidoreductase (cytochrome b-c1 complex, complex III, CIII) and cytochrome c oxidase (complex IV, CIV), that cooperate to transfer electrons derived from NADH and succinate to molecular oxygen, creating an electrochemical gradient over the inner membrane that drives transmembrane transport and the ATP synthase. Cytochrome c oxidase is the component of the respiratory chain that catalyzes the reduction of oxygen to water. Electrons originating from reduced cytochrome c in the intermembrane space (IMS) are transferred via the dinuclear copper A center (CU(A)) of subunit 2 and heme A of subunit 1 to the active site in subunit 1, a binuclear center (BNC) formed by heme A3 and copper B (CU(B)). The BNC reduces molecular oxygen to 2 water molecules using 4 electrons from cytochrome c in the IMS and 4 protons from the mitochondrial matrix. The polypeptide is Cytochrome c oxidase subunit 2 (MT-CO2) (Lycodon semicarinatus (Ryukyu odd-tooth snake)).